A 77-amino-acid polypeptide reads, in one-letter code: Cell division topological specificity factor (77 aa).

It belongs to the MinE family.

Functionally, prevents the cell division inhibition by proteins MinC and MinD at internal division sites while permitting inhibition at polar sites. This ensures cell division at the proper site by restricting the formation of a division septum at the midpoint of the long axis of the cell. The chain is Cell division topological specificity factor from Nautilia profundicola (strain ATCC BAA-1463 / DSM 18972 / AmH).